The primary structure comprises 265 residues: MTTFQAIFLGILQGLGEFLPISSSAHLIIFPWLFGWKEHSLVFDVALHLGTLLAVLVYFWKDYLDIVVQGIAKPKSEKGKLFWFIIVATIPGALFGYLFENIVEEVFRKQYLLIAIVLAVFGFILYYVDSIAKNKIELSKMNVFQAALIGVSQAFALFPGISRSGITMTTGLLLGLKKEAAAKFSFLMSAPIILGAGAVSLLKNINHVSAEFSNFAIGFFTSAVVGFLAIHFLLGIVKKSGFKIFAYYRFFLAAVILAFYLLRAV.

8 consecutive transmembrane segments (helical) span residues 14 to 34, 40 to 60, 79 to 99, 112 to 132, 141 to 161, 182 to 202, 217 to 237, and 242 to 262; these read GLGE…PWLF, SLVF…VYFW, GKLF…GYLF, LLIA…DSIA, MNVF…FPGI, AKFS…VSLL, IGFF…LGIV, and FKIF…FYLL.

The protein belongs to the UppP family.

It is found in the cell membrane. It catalyses the reaction di-trans,octa-cis-undecaprenyl diphosphate + H2O = di-trans,octa-cis-undecaprenyl phosphate + phosphate + H(+). Functionally, catalyzes the dephosphorylation of undecaprenyl diphosphate (UPP). Confers resistance to bacitracin. The protein is Undecaprenyl-diphosphatase of Caldicellulosiruptor bescii (strain ATCC BAA-1888 / DSM 6725 / KCTC 15123 / Z-1320) (Anaerocellum thermophilum).